Here is a 277-residue protein sequence, read N- to C-terminus: S-formylglutathione hydrolase FrmB (277 aa).

Catalysis depends on charge relay system residues Ser-145, Asp-221, and His-254.

This sequence belongs to the esterase D family.

It catalyses the reaction S-formylglutathione + H2O = formate + glutathione + H(+). In terms of biological role, serine hydrolase involved in the detoxification of formaldehyde. Hydrolyzes S-formylglutathione to glutathione and formate. The protein is S-formylglutathione hydrolase FrmB (frmB) of Escherichia coli (strain SMS-3-5 / SECEC).